Here is a 245-residue protein sequence, read N- to C-terminus: Orotidine 5'-phosphate decarboxylase (245 aa).

Substrate-binding positions include aspartate 22, lysine 44, 71–80 (DLKFHDIPNT), threonine 131, arginine 192, glutamine 201, glycine 221, and arginine 222. Lysine 73 acts as the Proton donor in catalysis.

Belongs to the OMP decarboxylase family. Type 1 subfamily. In terms of assembly, homodimer.

It catalyses the reaction orotidine 5'-phosphate + H(+) = UMP + CO2. The protein operates within pyrimidine metabolism; UMP biosynthesis via de novo pathway; UMP from orotate: step 2/2. Catalyzes the decarboxylation of orotidine 5'-monophosphate (OMP) to uridine 5'-monophosphate (UMP). This chain is Orotidine 5'-phosphate decarboxylase, found in Salmonella typhi.